The sequence spans 101 residues: NADH-quinone oxidoreductase subunit K (101 aa).

Transmembrane regions (helical) follow at residues 4-24 (LAHY…GIFL), 30-50 (IIIL…FVAF), and 61-81 (IFVF…LAIL).

This sequence belongs to the complex I subunit 4L family. As to quaternary structure, NDH-1 is composed of 14 different subunits. Subunits NuoA, H, J, K, L, M, N constitute the membrane sector of the complex.

Its subcellular location is the cell inner membrane. The enzyme catalyses a quinone + NADH + 5 H(+)(in) = a quinol + NAD(+) + 4 H(+)(out). NDH-1 shuttles electrons from NADH, via FMN and iron-sulfur (Fe-S) centers, to quinones in the respiratory chain. The immediate electron acceptor for the enzyme in this species is believed to be ubiquinone. Couples the redox reaction to proton translocation (for every two electrons transferred, four hydrogen ions are translocated across the cytoplasmic membrane), and thus conserves the redox energy in a proton gradient. The chain is NADH-quinone oxidoreductase subunit K from Paraburkholderia phymatum (strain DSM 17167 / CIP 108236 / LMG 21445 / STM815) (Burkholderia phymatum).